Reading from the N-terminus, the 1159-residue chain is ATP-dependent helicase/deoxyribonuclease subunit B (1159 aa).

The protein belongs to the helicase family. AddB/RexB type 2 subfamily. As to quaternary structure, heterodimer of AddA and RexB. It depends on Mg(2+) as a cofactor.

Its function is as follows. The heterodimer acts as both an ATP-dependent DNA helicase and an ATP-dependent, dual-direction single-stranded exonuclease. Recognizes the chi site generating a DNA molecule suitable for the initiation of homologous recombination. This subunit has 5' -&gt; 3' nuclease activity but not helicase activity. The polypeptide is ATP-dependent helicase/deoxyribonuclease subunit B (Leuconostoc mesenteroides subsp. mesenteroides (strain ATCC 8293 / DSM 20343 / BCRC 11652 / CCM 1803 / JCM 6124 / NCDO 523 / NBRC 100496 / NCIMB 8023 / NCTC 12954 / NRRL B-1118 / 37Y)).